The following is a 496-amino-acid chain: Guanosine-5'-triphosphate,3'-diphosphate pyrophosphatase (496 aa).

It belongs to the GppA/Ppx family. GppA subfamily.

It catalyses the reaction guanosine 3'-diphosphate 5'-triphosphate + H2O = guanosine 3',5'-bis(diphosphate) + phosphate + H(+). It participates in purine metabolism; ppGpp biosynthesis; ppGpp from GTP: step 2/2. Functionally, catalyzes the conversion of pppGpp to ppGpp. Guanosine pentaphosphate (pppGpp) is a cytoplasmic signaling molecule which together with ppGpp controls the 'stringent response', an adaptive process that allows bacteria to respond to amino acid starvation, resulting in the coordinated regulation of numerous cellular activities. This chain is Guanosine-5'-triphosphate,3'-diphosphate pyrophosphatase, found in Aeromonas hydrophila subsp. hydrophila (strain ATCC 7966 / DSM 30187 / BCRC 13018 / CCUG 14551 / JCM 1027 / KCTC 2358 / NCIMB 9240 / NCTC 8049).